We begin with the raw amino-acid sequence, 387 residues long: Eukaryotic translation initiation factor 3 subunit M (387 aa).

The PCI domain maps to 181 to 340; it reads LSSKVMIELL…RKVHISSTMH (160 aa).

It belongs to the eIF-3 subunit M family. Component of the eukaryotic translation initiation factor 3 (eIF-3) complex. The eIF-3 complex interacts with pix.

Its subcellular location is the cytoplasm. It is found in the golgi apparatus. Component of the eukaryotic translation initiation factor 3 (eIF-3) complex, which is involved in protein synthesis of a specialized repertoire of mRNAs and, together with other initiation factors, stimulates binding of mRNA and methionyl-tRNAi to the 40S ribosome. The eIF-3 complex specifically targets and initiates translation of a subset of mRNAs involved in cell proliferation. This Drosophila ananassae (Fruit fly) protein is Eukaryotic translation initiation factor 3 subunit M.